The primary structure comprises 605 residues: MGKYYQIFFLLYLLCILYVISCGYINPYSPYSSPCLFAPIIGYLYMGGSLSSNSSNNNNNNNNNNNNNNNNNNNNNNNNNNKDSKLTENCNNNSSNNNSDNKSNIKNKQHHHHSNFRNRRGKSNNKNSSDNDDCTKCNKRHHTQSSSYDTSELHQSVSSGLGGSMGSGSQALTDIEKDINEFMNANPSHSLNKQQIQQQQQLQQQQQQLLKQQQQQQQQQQQQQQQQQQQQLEKQRKEQEETEKKKQLELQQQQQLQQQQQNGNGLIIEEDMMEGRILRNISKVYRDVNENQPKSYYDYEGYRINWKNVDRYEVIQKIGRGKYSEVFSGIDIETSDEVVIKVLKPVQKLKIQREIKILESLNGGPNIIPLLDSVKDQSSKVCSLVFPFVNKTDIRELVYTLDDYDIRYYIFELLKAIDYTHSKGIIHRDIKPLNIAIDHSKRKLSLIDWGLAEYYHPGKNYNVRVASRHYKPPELLVNMFDYDYSLDMWSLGCLFAGLILDRDPFFNGDNNNDQLLKIVKVLGTDDLFNFLDKFGLSLTDEQSSLIKPRQKSNWERFIPYENDDIAQPDAIDFLDKLLRYDPTERLTAKEAMKHPYFKDFNQSIL.

Residues 5-25 (YQIFFLLYLLCILYVISCGYI) form a helical membrane-spanning segment. N-linked (GlcNAc...) asparagine glycosylation is present at Asn-53. 2 stretches are compositionally biased toward low complexity: residues 54–81 (SSNNNNNNNNNNNNNNNNNNNNNNNNNN) and 89–104 (NCNNNSSNNNSDNKSN). The tract at residues 54–170 (SSNNNNNNNN…LGGSMGSGSQ (117 aa)) is disordered. Asn-92, Asn-93, Asn-97, and Asn-101 each carry an N-linked (GlcNAc...) asparagine glycan. Basic residues predominate over residues 105 to 123 (IKNKQHHHHSNFRNRRGKS). N-linked (GlcNAc...) asparagine glycosylation occurs at Asn-127. Residues 144-155 (QSSSYDTSELHQ) show a composition bias toward polar residues. Residue Asn-280 is glycosylated (N-linked (GlcNAc...) asparagine). One can recognise a Protein kinase domain in the interval 312 to 597 (YEVIQKIGRG…AKEAMKHPYF (286 aa)). Residues 318-326 (IGRGKYSEV) and Lys-341 contribute to the ATP site. Asn-390 is a glycosylation site (N-linked (GlcNAc...) asparagine). The Proton acceptor role is filled by Asp-429. Residue Asn-601 is glycosylated (N-linked (GlcNAc...) asparagine).

It belongs to the protein kinase superfamily. CMGC Ser/Thr protein kinase family.

It is found in the membrane. The catalysed reaction is L-seryl-[protein] + ATP = O-phospho-L-seryl-[protein] + ADP + H(+). It carries out the reaction L-threonyl-[protein] + ATP = O-phospho-L-threonyl-[protein] + ADP + H(+). The chain is Probable serine/threonine-protein kinase DDB_G0286481 from Dictyostelium discoideum (Social amoeba).